The primary structure comprises 295 residues: Sulfotransferase 1E1 (295 aa).

A 3'-phosphoadenylyl sulfate-binding site is contributed by Lys-48–Trp-53. Lys-106–His-108 serves as a coordination point for substrate. The active-site Proton acceptor is His-108. Residues Arg-130 and Ser-138 each coordinate 3'-phosphoadenylyl sulfate. Ser-156 carries the phosphoserine modification. Residues Tyr-193, Thr-227 to Met-232, and Arg-257 to Gly-259 each bind 3'-phosphoadenylyl sulfate.

The protein belongs to the sulfotransferase 1 family. In terms of assembly, homodimer. As to expression, liver of young mature males and uterus.

It is found in the cytoplasm. The protein resides in the cytosol. The enzyme catalyses estrone + 3'-phosphoadenylyl sulfate = estrone 3-sulfate + adenosine 3',5'-bisphosphate + H(+). It carries out the reaction (24S)-hydroxycholesterol + 3'-phosphoadenylyl sulfate = (24S)-hydroxycholesterol 3-sulfate + adenosine 3',5'-bisphosphate + H(+). The catalysed reaction is 17beta-estradiol + 3'-phosphoadenylyl sulfate = 17beta-estradiol 3-sulfate + adenosine 3',5'-bisphosphate + H(+). It catalyses the reaction 3beta-hydroxyandrost-5-en-17-one + 3'-phosphoadenylyl sulfate = dehydroepiandrosterone 3-sulfate + adenosine 3',5'-bisphosphate + H(+). The enzyme catalyses 4-ethylphenol + 3'-phosphoadenylyl sulfate = 4-ethylphenyl sulfate + adenosine 3',5'-bisphosphate + H(+). Inhibited by estradiol. Functionally, sulfotransferase that utilizes 3'-phospho-5'-adenylyl sulfate (PAPS) as sulfonate donor to catalyze the sulfate conjugation of estradiol and estrone. Is a key enzyme in estrogen homeostasis, the sulfation of estrogens leads to their inactivation. Also sulfates dehydroepiandrosterone (DHEA), pregnenolone, (24S)-hydroxycholesterol and xenobiotic compounds like ethinylestradiol, equalenin, diethyl stilbesterol and 1-naphthol at significantly lower efficiency. Does not sulfonate cortisol, testosterone and dopamine. May play a role in gut microbiota-host metabolic interaction. O-sulfonates 4-ethylphenol (4-EP), a dietary tyrosine-derived metabolite produced by gut bacteria. The product 4-EPS crosses the blood-brain barrier and may negatively regulate oligodendrocyte maturation and myelination, affecting the functional connectivity of different brain regions associated with the limbic system. In Rattus norvegicus (Rat), this protein is Sulfotransferase 1E1.